Here is an 827-residue protein sequence, read N- to C-terminus: Glycerol-3-phosphate acyltransferase (827 aa).

An HXXXXD motif motif is present at residues 309 to 314; that stretch reads CHRSHI.

The protein belongs to the GPAT/DAPAT family.

The protein localises to the cell inner membrane. The enzyme catalyses sn-glycerol 3-phosphate + an acyl-CoA = a 1-acyl-sn-glycero-3-phosphate + CoA. The protein operates within phospholipid metabolism; CDP-diacylglycerol biosynthesis; CDP-diacylglycerol from sn-glycerol 3-phosphate: step 1/3. This Ectopseudomonas mendocina (strain ymp) (Pseudomonas mendocina) protein is Glycerol-3-phosphate acyltransferase.